A 277-amino-acid polypeptide reads, in one-letter code: Transcription factor HES-4-B (277 aa).

The segment at 1–44 (MPADSMEKPTASPIAGAPANSAQTPDKPKSASEHRKSSKPIMEK) is disordered. A compositionally biased stretch (basic and acidic residues) spans 26-35 (DKPKSASEHR). In terms of domain architecture, bHLH spans 34–91 (HRKSSKPIMEKRRRARINESLGQLKTLILDALKKDSSRHSKLEKADILEMTVKHLRNL). In terms of domain architecture, Orange spans 110 to 143 (YRAGFNECMNEVTRFLSTCEGVNTEVRTRLLGHL). The tract at residues 258–277 (VSPLGGSTRADSAESVWRPW) is disordered. Residues 274-277 (WRPW) carry the WRPW motif motif.

Transcription repression requires formation of a complex with a corepressor protein of the Groucho/TLE family. Interacts with the bHLH protein hes6; this interaction may inhibit the transcriptional repressor activity. Binds DNA in the form of a heterodimer with the bHLH protein hey1/hrt1. Interacts (via Orange domain) with id3 (via HLH domain). Dynamically expressed in the borders of several tissue territories. Expressed in the pre-placodal ectoderm (PPE) from gastrula stage. During gastrulation, expressed in the deep layer of the dorsal lip, the Spemann organizer and three distinct regions in the prospective neuroectoderm: neural plate border, presumptive floor plate/notoplate and anterior neural plate. At later stages, expression is localized to the anterior of the prechordal plate, the presomitic mesoderm, neural tube, neural crest derivatives and several tissues of the central nervous system, with expression in the developing floor plate continues to at least the tadpole stage. From the early tailbud stage, expressed in the dorsoanterior region of the developing pronephros. During early tailbud stages, broadly expressed within the pronephric mesoderm. and in the sensorial layer of the ectoderm covering the pronephros anlagen. During late tailbud to early tadpole stages, expressed in the ventral region of the pronephros. Expression remains in the proximal and distal tubules at late tadpole stages (stage 35).

Its subcellular location is the nucleus. Functionally, transcriptional repressor. Binds DNA on N-box motifs: 5'-CACNAG-3'. Promotes floor plate development and prechordal plate development. Required for lens development as early as the stage of lens field formation, partly through regulation of gene expression of the cell cycle inhibitor cdknx/p27(xic1). Required for formation of the neural crest downstream of multiple signaling pathways, and acts at the neural plate border via both DNA-binding dependent and independent mechanisms; acts in a DNA-binding dependent manner to repress pro-apoptotic and neural crest differentiation genes, including id3, delta1, and cdknx/p27(xic1), and thus promote the cell survival of neural plate border cells and maintain them in an undifferentiated state. Represses transcription of id3, at least in part through the repression of bmp4. On the other hand, acts in a DNA-independent manner separate from the transcriptional repressor function, to stimulate cell proliferation and promote neural crest formation. Via this DNA-independent route, acts in neurulae upstream of stat3 to transiently up-regulate the notch ligand dll1/delta1, which in turn up-regulates id3 expression. Then interacts directly with id3, which blocks the transcriptional repressor function of hes4-B/hairy2b to allow the progression of neural crest progenitors through specification and differentiation. Also acts via repressor-dependent and repressor-independent mechanisms in early gastrulae to establish the prospective anterior prechordal mesoderm identity in the Spemann organizer; induces specific genes independently from direct transcriptional regulation, and represses the genes specific for neighboring tissues through direct transcriptional repression. Modulates lateral inhibition during notch signaling and regulates the cell context dependent effects of notch (which can have inhibitory, permissive or enhancing roles in muscle or neural differentiation). Inhibits myogenesis. The chain is Transcription factor HES-4-B (hes4-b) from Xenopus laevis (African clawed frog).